A 184-amino-acid chain; its full sequence is Ribosome-recycling factor (184 aa).

The protein belongs to the RRF family.

The protein localises to the cytoplasm. Its function is as follows. Responsible for the release of ribosomes from messenger RNA at the termination of protein biosynthesis. May increase the efficiency of translation by recycling ribosomes from one round of translation to another. This Borrelia hermsii (strain HS1 / DAH) protein is Ribosome-recycling factor.